Here is a 141-residue protein sequence, read N- to C-terminus: MLMPKRVKYRKQQRGHNRGMAHRGNTVAFGEYGLMAIEATWMTSRQIEAARRAISHHVKRGGKIWIRIFPDKPVTAKPAETRMGSGKGAVDHYVAVIKPGRILFELAGVRPEIAHEALERAAQKLPIKCKIVAREDLEGAA.

The interval 1 to 21 (MLMPKRVKYRKQQRGHNRGMA) is disordered.

It belongs to the universal ribosomal protein uL16 family. In terms of assembly, part of the 50S ribosomal subunit.

Binds 23S rRNA and is also seen to make contacts with the A and possibly P site tRNAs. The polypeptide is Large ribosomal subunit protein uL16 (Roseiflexus castenholzii (strain DSM 13941 / HLO8)).